A 179-amino-acid chain; its full sequence is Large ribosomal subunit protein uL5 (179 aa).

Belongs to the universal ribosomal protein uL5 family. Part of the 50S ribosomal subunit; part of the 5S rRNA/L5/L18/L25 subcomplex. Contacts the 5S rRNA and the P site tRNA. Forms a bridge to the 30S subunit in the 70S ribosome.

This is one of the proteins that bind and probably mediate the attachment of the 5S RNA into the large ribosomal subunit, where it forms part of the central protuberance. In the 70S ribosome it contacts protein S13 of the 30S subunit (bridge B1b), connecting the 2 subunits; this bridge is implicated in subunit movement. Contacts the P site tRNA; the 5S rRNA and some of its associated proteins might help stabilize positioning of ribosome-bound tRNAs. In Paraburkholderia phymatum (strain DSM 17167 / CIP 108236 / LMG 21445 / STM815) (Burkholderia phymatum), this protein is Large ribosomal subunit protein uL5.